A 1498-amino-acid chain; its full sequence is Transposon Ty3-I Gag-Pol polyprotein (1498 aa).

A CCHC-type zinc finger spans residues 265-282 (RLCFYCKKEGHRLNECRA). Asp-336 acts as the For protease activity; shared with dimeric partner in catalysis. Residues 470–490 (TDPKSAGNRGNPRNTKLSLAP) are disordered. In terms of domain architecture, Reverse transcriptase spans 646-823 (LDNKFIVPSK…EETEFLGYSI (178 aa)). Residues Asp-712, Asp-774, and Asp-775 each coordinate Mg(2+). One can recognise an RNase H Ty3/gyspy-type domain in the interval 919 to 1037 (DASKDGIGAV…VADAISRAIY (119 aa)). An integrase-type zinc finger-like region spans residues 1132–1171 (HTLFGGHFGVTVTLAKISPIYYWPKLQHSIIQYIRTCVQC). The 166-residue stretch at 1185-1350 (LQPLPIAEGR…SPFEIDLGYL (166 aa)) folds into the Integrase catalytic domain. Asp-1201 and Asp-1262 together coordinate Mg(2+).

As to quaternary structure, the protease is a homodimer, whose active site consists of two apposed aspartic acid residues. Initially, virus-like particles (VLPs) are composed of the structural unprocessed proteins Gag and Gag-Pol, and also contain the host initiator methionine tRNA (tRNA(i)-Met) which serves as a primer for minus-strand DNA synthesis, and a dimer of genomic Ty RNA. Processing of the polyproteins occurs within the particle and proceeds by an ordered pathway, called maturation. First, the protease (PR) is released by autocatalytic cleavage of the Gag-Pol polyprotein, and this cleavage is a prerequisite for subsequent processing at the remaining sites to release the mature structural and catalytic proteins. Maturation takes place prior to the RT reaction and is required to produce transposition-competent VLPs.

The protein localises to the cytoplasm. It localises to the nucleus. The enzyme catalyses DNA(n) + a 2'-deoxyribonucleoside 5'-triphosphate = DNA(n+1) + diphosphate. It catalyses the reaction Endonucleolytic cleavage to 5'-phosphomonoester.. Functionally, capsid protein (CA) is the structural component of the virus-like particle (VLP), forming the shell that encapsulates the genomic RNA-nucleocapsid complex. Its function is as follows. Nucleocapsid protein p11 (NC) forms the nucleocore that coats the retro-elements dimeric RNA. Binds these RNAs through its zinc fingers. Promotes primer tRNA(i)-Met annealing to the multipartite primer-binding site (PBS), dimerization of Ty3 RNA and initiation of reverse transcription. The aspartyl protease (PR) mediates the proteolytic cleavages of the Gag and Gag-Pol polyproteins after assembly of the VLP. In terms of biological role, reverse transcriptase/ribonuclease H (RT) is a multifunctional enzyme that catalyzes the conversion of the retro-elements RNA genome into dsDNA within the VLP. The enzyme displays a DNA polymerase activity that can copy either DNA or RNA templates, and a ribonuclease H (RNase H) activity that cleaves the RNA strand of RNA-DNA heteroduplexes during plus-strand synthesis and hydrolyzes RNA primers. The conversion leads to a linear dsDNA copy of the retrotransposon that includes long terminal repeats (LTRs) at both ends. Functionally, integrase (IN) targets the VLP to the nucleus, where a subparticle preintegration complex (PIC) containing at least integrase and the newly synthesized dsDNA copy of the retrotransposon must transit the nuclear membrane. Once in the nucleus, integrase performs the integration of the dsDNA into the host genome. This is Transposon Ty3-I Gag-Pol polyprotein (TY3B-I) from Saccharomyces cerevisiae (strain ATCC 204508 / S288c) (Baker's yeast).